Here is a 207-residue protein sequence, read N- to C-terminus: uncharacterized protein (207 aa).

This is an uncharacterized protein from Frog virus 3 (isolate Goorha) (FV-3).